Consider the following 265-residue polypeptide: Capsule polysaccharide export inner-membrane protein BexB (265 aa).

Transmembrane regions (helical) follow at residues 37 to 57, 64 to 84, 121 to 141, 148 to 168, 178 to 198, and 235 to 255; these read IGFL…VMMW, KFST…AMMW, VAGA…IGWI, FYML…GLII, FGKI…AFFF, and ESIG…LVMV. In terms of domain architecture, ABC transmembrane type-2 spans 37-258; that stretch reads IGFLWLFVEP…LMGLVMVKNF (222 aa).

It belongs to the ABC-2 integral membrane protein family.

The protein resides in the cell inner membrane. May form an ATP-driven capsule polysaccharide export apparatus, in association with the BexA, BexC and BexD proteins. The sequence is that of Capsule polysaccharide export inner-membrane protein BexB (bexB) from Haemophilus influenzae.